Consider the following 154-residue polypeptide: MITVIQRTGSARVRVGGEVVGEIERGLVALVCAVHGDGSAQAQRLAERVLGYRVFPDAEGRMNGSALDLGCGVLAVPQFTLAADTRKGMRPSFGPAADPQTGQALFETFLEALRERATGPVASGVFGADMQVELVNDGPVTFWLEAPPRPAGPV.

A Gly-cisPro motif, important for rejection of L-amino acids motif is present at residues 138 to 139 (GP).

Belongs to the DTD family. Homodimer.

It localises to the cytoplasm. The enzyme catalyses glycyl-tRNA(Ala) + H2O = tRNA(Ala) + glycine + H(+). It catalyses the reaction a D-aminoacyl-tRNA + H2O = a tRNA + a D-alpha-amino acid + H(+). In terms of biological role, an aminoacyl-tRNA editing enzyme that deacylates mischarged D-aminoacyl-tRNAs. Also deacylates mischarged glycyl-tRNA(Ala), protecting cells against glycine mischarging by AlaRS. Acts via tRNA-based rather than protein-based catalysis; rejects L-amino acids rather than detecting D-amino acids in the active site. By recycling D-aminoacyl-tRNA to D-amino acids and free tRNA molecules, this enzyme counteracts the toxicity associated with the formation of D-aminoacyl-tRNA entities in vivo and helps enforce protein L-homochirality. This Halorhodospira halophila (strain DSM 244 / SL1) (Ectothiorhodospira halophila (strain DSM 244 / SL1)) protein is D-aminoacyl-tRNA deacylase.